Reading from the N-terminus, the 428-residue chain is Delta-aminolevulinic acid dehydratase, chloroplastic (428 aa).

K294 acts as the Schiff-base intermediate with substrate in catalysis. R304 and K316 together coordinate 5-aminolevulinate. Residue E332 coordinates Mg(2+). Residue K347 is the Schiff-base intermediate with substrate of the active site. Positions 373 and 412 each coordinate 5-aminolevulinate.

Belongs to the ALAD family. Homooctamer. Mg(2+) is required as a cofactor.

The protein localises to the plastid. Its subcellular location is the chloroplast. The enzyme catalyses 2 5-aminolevulinate = porphobilinogen + 2 H2O + H(+). It functions in the pathway porphyrin-containing compound metabolism; protoporphyrin-IX biosynthesis; coproporphyrinogen-III from 5-aminolevulinate: step 1/4. In terms of biological role, catalyzes an early step in the biosynthesis of tetrapyrroles. Binds two molecules of 5-aminolevulinate per subunit, each at a distinct site, and catalyzes their condensation to form porphobilinogen. The polypeptide is Delta-aminolevulinic acid dehydratase, chloroplastic (HEMB) (Hordeum vulgare (Barley)).